A 943-amino-acid chain; its full sequence is Isoleucine--tRNA ligase (943 aa).

A 'HIGH' region motif is present at residues 59–69 (PYANGQIHLGH). L-isoleucyl-5'-AMP is bound at residue Glu-577. Residues 618-622 (KMSKS) carry the 'KMSKS' region motif. ATP is bound at residue Lys-621. 4 residues coordinate Zn(2+): Cys-906, Cys-909, Cys-926, and Cys-929.

The protein belongs to the class-I aminoacyl-tRNA synthetase family. IleS type 1 subfamily. In terms of assembly, monomer. It depends on Zn(2+) as a cofactor.

The protein localises to the cytoplasm. The catalysed reaction is tRNA(Ile) + L-isoleucine + ATP = L-isoleucyl-tRNA(Ile) + AMP + diphosphate. Functionally, catalyzes the attachment of isoleucine to tRNA(Ile). As IleRS can inadvertently accommodate and process structurally similar amino acids such as valine, to avoid such errors it has two additional distinct tRNA(Ile)-dependent editing activities. One activity is designated as 'pretransfer' editing and involves the hydrolysis of activated Val-AMP. The other activity is designated 'posttransfer' editing and involves deacylation of mischarged Val-tRNA(Ile). In Xylella fastidiosa (strain M23), this protein is Isoleucine--tRNA ligase.